Consider the following 792-residue polypeptide: Xaa-Pro dipeptidyl-peptidase (792 aa).

Residues Ser363, Asp482, and His513 each act as charge relay system in the active site.

It belongs to the peptidase S15 family. As to quaternary structure, homodimer.

The protein localises to the cytoplasm. It catalyses the reaction Hydrolyzes Xaa-Pro-|- bonds to release unblocked, N-terminal dipeptides from substrates including Ala-Pro-|-p-nitroanilide and (sequentially) Tyr-Pro-|-Phe-Pro-|-Gly-Pro-|-Ile.. Its function is as follows. Removes N-terminal dipeptides sequentially from polypeptides having unsubstituted N-termini provided that the penultimate residue is proline. The chain is Xaa-Pro dipeptidyl-peptidase from Lactobacillus delbrueckii subsp. bulgaricus (strain ATCC BAA-365 / Lb-18).